A 500-amino-acid polypeptide reads, in one-letter code: MKFLIKSLAVATISILGCLQTALAEEAKTESLTDKAVKHEKLGVKIESANHLFAEKYPLQYDSWKSTAKSTDRGSALEADPRYVILWAGYAFAKDYNKPRGHFYAVTDVRDILRTGAPKDENDGPQPMACWTCKGPDVPRLIEEKGERGYFDPKWAKYGAEIVNSIGCADCHDTTSEEFKQGKPALRVARPHVLRALNTVGWKFEDLDKHGKRPAVCANCHVEYYFKNKTDVTFPWDKGVDVDSIEKYYDEINFTDWTHALSKAPMLKTQHPDFEVWSQGTHGKNGVTCIDCHMPKVKDKDGKVYTDHKIGNPFDQFEATCKTCHEQSKETLEKRVKEYKHEVKEAMIRLEDQLVKAHFEAKAAWEAGATQEEMKEILMAIRHAQWRWDYSAAGHGNHFHAPDVMLRTIATGIDRAADARAKLGVVLAKHGVTTPVAIPDISTKEKAQLAIGLDIPKEQAAKDEFLKTVVPQWEKEARAKGLLPAEEADKPVAAPKAEAK.

The first 24 residues, M1–A24, serve as a signal peptide directing secretion. H102, C130, C133, K134, C168, C171, H172, C217, C220, and H221 together coordinate heme c. Ca(2+) is bound by residues E223, Y224, K268, and Q270. Y224 contacts substrate. H271 lines the substrate pocket. Positions 282, 289, 292, 293, 308, 321, 324, 325, and 400 each coordinate heme c. The segment at A477 to K500 is disordered.

Belongs to the cytochrome c-552 family. Ca(2+) is required as a cofactor. The cofactor is heme c.

It localises to the periplasm. The catalysed reaction is 6 Fe(III)-[cytochrome c] + NH4(+) + 2 H2O = 6 Fe(II)-[cytochrome c] + nitrite + 8 H(+). It participates in nitrogen metabolism; nitrate reduction (assimilation). Functionally, catalyzes the reduction of nitrite to ammonia, consuming six electrons in the process. The protein is Cytochrome c-552 of Mannheimia haemolytica (Pasteurella haemolytica).